We begin with the raw amino-acid sequence, 363 residues long: Protein-arginine kinase (363 aa).

A Phosphagen kinase C-terminal domain is found at 24–254; it reads IVLSSRIRLA…AQLIEQERSA (231 aa). ATP-binding positions include 27-31, His-92, Arg-125, 176-180, and 207-212; these read SSRIR, RASVM, and RGIYGE. Residues 337-342 carry the RDXXRA motif of the pArg binding pocket involved in allosteric regulation motif; sequence RDARRA.

Belongs to the ATP:guanido phosphotransferase family.

It carries out the reaction L-arginyl-[protein] + ATP = N(omega)-phospho-L-arginyl-[protein] + ADP + H(+). With respect to regulation, appears to be allosterically activated by the binding of pArg-containing polypeptides to the pArg-binding pocket localized in the C-terminal domain of McsB. In terms of biological role, catalyzes the specific phosphorylation of arginine residues in a large number of proteins. Is part of the bacterial stress response system. Protein arginine phosphorylation has a physiologically important role and is involved in the regulation of many critical cellular processes, such as protein homeostasis, motility, competence, and stringent and stress responses, by regulating gene expression and protein activity. The sequence is that of Protein-arginine kinase from Bacillus velezensis (strain DSM 23117 / BGSC 10A6 / LMG 26770 / FZB42) (Bacillus amyloliquefaciens subsp. plantarum).